The chain runs to 462 residues: MDPTDLAFAGAAAQARMLADGALTAPMLLEVYLQRIERLDSHLRAYRVVQFDRARAEAEAAQQRLDAGERLPLLGVPIAIKDDVDIAGEVTTYGSAGHGPAATSDAEVVRRLRAAGAVIIGKTNVPELMIMPFTESLAFGATRNPWCLNRTPGGSSGGSAAAVAAGLAPVALGSDGGGSIRIPCTWCGLFGLKPQRDRISLEPHDGAWQGLSVNGPIARSVMDAALLLDATTTVPGPEGEFVAAAARQPGRLRIALSTRVPTPLPVRCGKQELAAVHQAGALLRDLGHDVVVRDPDYPASTYANYLPRFFRGISDDADAQAHPDRLEARTRAIARLGSFFSDRRMAALRAAEVVLSSRIQSIFDDVDVVVTPGAATGPSRIGAYQRRGAVSTLLLVVQRVPYFQVWNLTGQPAAVVPWDFDGDGLPMSVQLVGRPYDEATLLALAAQIESARPWAHRRPSVS.

Catalysis depends on charge relay system residues K81 and S155. Residue S179 is the Acyl-ester intermediate of the active site.

It belongs to the amidase family.

It carries out the reaction a monocarboxylic acid amide + H2O = a monocarboxylate + NH4(+). The polypeptide is Putative amidase AmiB2 (amiB2) (Mycobacterium bovis (strain ATCC BAA-935 / AF2122/97)).